Consider the following 120-residue polypeptide: uncharacterized protein (120 aa).

Positions methionine 1–alanine 22 are cleaved as a signal peptide. Over phenylalanine 23–serine 59 the chain is Extracellular. A helical membrane pass occupies residues leucine 60–leucine 80. Residues serine 81 to asparagine 120 lie on the Cytoplasmic side of the membrane.

Its subcellular location is the membrane. This is an uncharacterized protein from Schizosaccharomyces pombe (strain 972 / ATCC 24843) (Fission yeast).